Consider the following 721-residue polypeptide: Mitogen-activated protein kinase 6 (721 aa).

Positions 20 to 316 (YMDLKPLGCG…AEEALSHPYM (297 aa)) constitute a Protein kinase domain. Residues 26–34 (LGCGGNGLV) and Lys-49 contribute to the ATP site. Asp-152 (proton acceptor) is an active-site residue. Thr-626 carries the phosphothreonine modification. The TXY signature appears at 626 to 628 (TSY). The residue at position 628 (Tyr-628) is a Phosphotyrosine.

The protein belongs to the protein kinase superfamily. CMGC Ser/Thr protein kinase family. MAP kinase subfamily. Requires Mg(2+) as cofactor. Dually phosphorylated on Thr-626 and Tyr-628, which activates the enzyme.

It catalyses the reaction L-seryl-[protein] + ATP = O-phospho-L-seryl-[protein] + ADP + H(+). The catalysed reaction is L-threonyl-[protein] + ATP = O-phospho-L-threonyl-[protein] + ADP + H(+). Activated by threonine and tyrosine phosphorylation. In terms of biological role, phosphorylates microtubule-associated protein 2 (MAP2). May promote entry in the cell cycle. The protein is Mitogen-activated protein kinase 6 (MAPK6) of Gallus gallus (Chicken).